The chain runs to 459 residues: tRNA modification GTPase MnmE (459 aa).

Residues R23, E88, and R127 each contribute to the (6S)-5-formyl-5,6,7,8-tetrahydrofolate site. In terms of domain architecture, TrmE-type G spans 223-381; that stretch reads GLDVVIVGKP…LKEYIKDLFF (159 aa). A K(+)-binding site is contributed by N233. GTP contacts are provided by residues 233–238, 252–258, and 277–280; these read NVGKSS, TEIPGTT, and DTAG. Residue S237 coordinates Mg(2+). K(+)-binding residues include T252, I254, and T257. Position 258 (T258) interacts with Mg(2+). Position 459 (K459) interacts with (6S)-5-formyl-5,6,7,8-tetrahydrofolate.

It belongs to the TRAFAC class TrmE-Era-EngA-EngB-Septin-like GTPase superfamily. TrmE GTPase family. In terms of assembly, homodimer. Heterotetramer of two MnmE and two MnmG subunits. It depends on K(+) as a cofactor.

It localises to the cytoplasm. In terms of biological role, exhibits a very high intrinsic GTPase hydrolysis rate. Involved in the addition of a carboxymethylaminomethyl (cmnm) group at the wobble position (U34) of certain tRNAs, forming tRNA-cmnm(5)s(2)U34. The polypeptide is tRNA modification GTPase MnmE (Clostridium tetani (strain Massachusetts / E88)).